The primary structure comprises 74 residues: Sec-independent protein translocase protein TatA (74 aa).

A helical membrane pass occupies residues 1–21; sequence MGSIGMTELLLIFGIIVLLFG.

Belongs to the TatA/E family. Forms a complex with TatC.

It is found in the cell inner membrane. In terms of biological role, part of the twin-arginine translocation (Tat) system that transports large folded proteins containing a characteristic twin-arginine motif in their signal peptide across membranes. TatA could form the protein-conducting channel of the Tat system. This Sulfurihydrogenibium sp. (strain YO3AOP1) protein is Sec-independent protein translocase protein TatA.